The chain runs to 362 residues: MNTEASQDQTVTETPGVRLRQARESLGLTQQTVAERLCLKVSTIRDIEEDNAQANLASTFHRGYIRSYAKLVHLPEDELLPILEKQAPVRAAKVAPMQSFSLGKKHKKRDGWLMSFTWLIVLVVLGLTGAWWWQNHQAQQAEIANMVDQSSAQLSQNGGQPVPLTDDNSDAIAPTDAPAPVANGQPVPLTNHSTSAVTNSATTSSATTSSVPTTSSVPKTTLVPKTNSTEPVDTANTNTTMHQEGAASAAVSPSQVPQPGLSTGPSPLPTADAGVSGSTSSVGALVMNFTADCWLQVVDATGKTLFSGIQKGGAVLNLAGKAPYKLTIGAPGALTISYQGNPVDLSKFIKANRVARLTVGVE.

Topologically, residues 1 to 111 (MNTEASQDQT…LGKKHKKRDG (111 aa)) are cytoplasmic. The HTH cro/C1-type domain maps to 19–79 (LRQARESLGL…KLVHLPEDEL (61 aa)). Positions 30–49 (QQTVAERLCLKVSTIRDIEE) form a DNA-binding region, H-T-H motif. Residues 112–132 (WLMSFTWLIVLVVLGLTGAWW) form a helical; Signal-anchor for type II membrane protein membrane-spanning segment. Over 133-362 (WQNHQAQQAE…RVARLTVGVE (230 aa)) the chain is Periplasmic. The disordered stretch occupies residues 151–277 (SAQLSQNGGQ…LPTADAGVSG (127 aa)). The segment covering 193–221 (STSAVTNSATTSSATTSSVPTTSSVPKTT) has biased composition (low complexity). Positions 223–242 (VPKTNSTEPVDTANTNTTMH) are enriched in polar residues. Residues 246-259 (AASAAVSPSQVPQP) show a composition bias toward low complexity.

This sequence belongs to the RodZ family.

It localises to the cell inner membrane. Cytoskeletal protein that is involved in cell-shape control through regulation of the length of the long axis. This chain is Cytoskeleton protein RodZ, found in Yersinia pseudotuberculosis serotype IB (strain PB1/+).